We begin with the raw amino-acid sequence, 147 residues long: MKKILLLNGPNLNMLGKREPHIYGSQTLADIENHLQQLAKARGYCLEYFQANGEEPIINRIHQSFQNTDFIIINPGASTHTSVALRDALLSVAIPFVEVHLSNVHAREPFRHHSYLSDVAKGVICGLGAKGYDYALDYAIQFLKSGK.

Tyrosine 23 acts as the Proton acceptor in catalysis. 3 residues coordinate substrate: asparagine 74, histidine 80, and aspartate 87. Residue histidine 100 is the Proton donor of the active site. Substrate contacts are provided by residues 101–102 (LS) and arginine 111.

Belongs to the type-II 3-dehydroquinase family. As to quaternary structure, homododecamer.

The catalysed reaction is 3-dehydroquinate = 3-dehydroshikimate + H2O. The protein operates within metabolic intermediate biosynthesis; chorismate biosynthesis; chorismate from D-erythrose 4-phosphate and phosphoenolpyruvate: step 3/7. Functionally, catalyzes a trans-dehydration via an enolate intermediate. This chain is 3-dehydroquinate dehydratase, found in Glaesserella parasuis serovar 5 (strain SH0165) (Haemophilus parasuis).